The sequence spans 360 residues: Photosystem II protein D1 (360 aa).

Helical transmembrane passes span 29–46 (YIGW…TATT), 118–133 (HFLL…EWEL), and 142–156 (WICV…AATA). His118 contacts chlorophyll a. Position 126 (Tyr126) interacts with pheophytin a. [CaMn4O5] cluster is bound by residues Asp170 and Glu189. The chain crosses the membrane as a helical span at residues 197–218 (FHMAGVAGVFGGALFSAMHGSL). His198 provides a ligand contact to chlorophyll a. A quinone is bound by residues His215 and 264–265 (SF). Residue His215 coordinates Fe cation. Position 272 (His272) interacts with Fe cation. The chain crosses the membrane as a helical span at residues 274–288 (FLGLWPVVGIWLTSI). His332, Glu333, Asp342, and Ala344 together coordinate [CaMn4O5] cluster. Positions 345–360 (DNSLLPVASSSPSINS) are excised as a propeptide.

This sequence belongs to the reaction center PufL/M/PsbA/D family. In terms of assembly, PSII is composed of 1 copy each of membrane proteins PsbA, PsbB, PsbC, PsbD, PsbE, PsbF, PsbH, PsbI, PsbJ, PsbK, PsbL, PsbM, PsbT, PsbY, PsbZ, Psb30/Ycf12, at least 3 peripheral proteins of the oxygen-evolving complex and a large number of cofactors. It forms dimeric complexes. Requires The D1/D2 heterodimer binds P680, chlorophylls that are the primary electron donor of PSII, and subsequent electron acceptors. It shares a non-heme iron and each subunit binds pheophytin, quinone, additional chlorophylls, carotenoids and lipids. D1 provides most of the ligands for the Mn4-Ca-O5 cluster of the oxygen-evolving complex (OEC). There is also a Cl(-1) ion associated with D1 and D2, which is required for oxygen evolution. The PSII complex binds additional chlorophylls, carotenoids and specific lipids. as cofactor. Tyr-161 forms a radical intermediate that is referred to as redox-active TyrZ, YZ or Y-Z.

The protein localises to the plastid. The protein resides in the chloroplast thylakoid membrane. It carries out the reaction 2 a plastoquinone + 4 hnu + 2 H2O = 2 a plastoquinol + O2. Photosystem II (PSII) is a light-driven water:plastoquinone oxidoreductase that uses light energy to abstract electrons from H(2)O, generating O(2) and a proton gradient subsequently used for ATP formation. It consists of a core antenna complex that captures photons, and an electron transfer chain that converts photonic excitation into a charge separation. The D1/D2 (PsbA/PsbD) reaction center heterodimer binds P680, the primary electron donor of PSII as well as several subsequent electron acceptors. The polypeptide is Photosystem II protein D1 (Cyanidium caldarium (Red alga)).